Consider the following 156-residue polypeptide: Transcription elongation factor GreA 1 (156 aa).

The stretch at 43–74 (RSENAEYSSAKRDLGRLESRLRYLNKQLQYAQ) forms a coiled coil.

It belongs to the GreA/GreB family.

In terms of biological role, necessary for efficient RNA polymerase transcription elongation past template-encoded arresting sites. The arresting sites in DNA have the property of trapping a certain fraction of elongating RNA polymerases that pass through, resulting in locked ternary complexes. Cleavage of the nascent transcript by cleavage factors such as GreA or GreB allows the resumption of elongation from the new 3'terminus. GreA releases sequences of 2 to 3 nucleotides. This Lactiplantibacillus plantarum (strain ATCC BAA-793 / NCIMB 8826 / WCFS1) (Lactobacillus plantarum) protein is Transcription elongation factor GreA 1.